The sequence spans 599 residues: Sulfite reductase [NADPH] flavoprotein alpha-component (599 aa).

The Flavodoxin-like domain occupies 63 to 201 (ITVISASQTG…LATAWRKQVV (139 aa)). FMN contacts are provided by residues 69–74 (SQTGNA), 116–119 (STQG), and 152–161 (LGDTSYENFC). One can recognise an FAD-binding FR-type domain in the interval 234–448 (EQPLTAQLAV…IEHNDNFRLP (215 aa)). Residues Thr322, His356, 386-389 (RLYS), 404-406 (TVG), Tyr410, and 419-422 (GGAS) contribute to the FAD site. NADP(+) is bound by residues 519–520 (SR), 525–529 (KVYVQ), and Asp561. Tyr599 serves as a coordination point for FAD.

The protein belongs to the NADPH-dependent sulphite reductase flavoprotein subunit CysJ family. In the N-terminal section; belongs to the flavodoxin family. This sequence in the C-terminal section; belongs to the flavoprotein pyridine nucleotide cytochrome reductase family. As to quaternary structure, alpha(8)-beta(8). The alpha component is a flavoprotein, the beta component is a hemoprotein. The cofactor is FAD. Requires FMN as cofactor.

It catalyses the reaction hydrogen sulfide + 3 NADP(+) + 3 H2O = sulfite + 3 NADPH + 4 H(+). The protein operates within sulfur metabolism; hydrogen sulfide biosynthesis; hydrogen sulfide from sulfite (NADPH route): step 1/1. Its function is as follows. Component of the sulfite reductase complex that catalyzes the 6-electron reduction of sulfite to sulfide. This is one of several activities required for the biosynthesis of L-cysteine from sulfate. The flavoprotein component catalyzes the electron flow from NADPH -&gt; FAD -&gt; FMN to the hemoprotein component. In Serratia proteamaculans (strain 568), this protein is Sulfite reductase [NADPH] flavoprotein alpha-component.